A 261-amino-acid polypeptide reads, in one-letter code: tRNA pseudouridine synthase A (261 aa).

The Nucleophile role is filled by Asp-51. A substrate-binding site is contributed by Tyr-109.

It belongs to the tRNA pseudouridine synthase TruA family. Homodimer.

It carries out the reaction uridine(38/39/40) in tRNA = pseudouridine(38/39/40) in tRNA. In terms of biological role, formation of pseudouridine at positions 38, 39 and 40 in the anticodon stem and loop of transfer RNAs. This Shewanella denitrificans (strain OS217 / ATCC BAA-1090 / DSM 15013) protein is tRNA pseudouridine synthase A.